An 817-amino-acid polypeptide reads, in one-letter code: Protein-glutamine gamma-glutamyltransferase K (817 aa).

Disordered stretches follow at residues 1–38 and 59–105; these read MMDGPRSDVGRWGGNPLQPPTTPSPEPEPEPDGRSRRG and DDWG…DGTI. The tract at residues 1 to 100 is membrane anchorage region; that stretch reads MMDGPRSDVG…VSRGSGVNAA (100 aa). The span at 17-26 shows a compositional bias: pro residues; that stretch reads LQPPTTPSPE. At threonine 22 the chain carries Phosphothreonine. Residues serine 24, serine 68, serine 82, serine 85, serine 92, and serine 95 each carry the phosphoserine modification. Residues 71 to 84 show a composition bias toward low complexity; it reads RGSSSGTRRPGSRG. Catalysis depends on residues cysteine 377, histidine 436, and aspartate 459. Ca(2+) contacts are provided by asparagine 499, aspartate 501, glutamate 548, and glutamate 553. The tract at residues 793–817 is disordered; that stretch reads GGFFSDAGGDSHLGETIPMASRGGA.

The protein belongs to the transglutaminase superfamily. Transglutaminase family. In terms of assembly, interacts with PLAAT4. Ca(2+) serves as cofactor. Palmitoylated. Post-translationally, the membrane anchorage region possesses a cluster of five cysteines within which fatty acid(s) may become thioester-linked. It is subject to phorbol ester-stimulated phosphorylation and is hypersensitive to proteolysis, which releases the enzyme in a soluble form. In terms of processing, tyrosine-phosphorylated.

The protein resides in the membrane. The enzyme catalyses L-glutaminyl-[protein] + L-lysyl-[protein] = [protein]-L-lysyl-N(6)-5-L-glutamyl-[protein] + NH4(+). Catalyzes the cross-linking of proteins and the conjugation of polyamines to proteins. Responsible for cross-linking epidermal proteins during formation of the stratum corneum. Involved in cell proliferation. This Homo sapiens (Human) protein is Protein-glutamine gamma-glutamyltransferase K (TGM1).